We begin with the raw amino-acid sequence, 185 residues long: NAD(P)H-dependent FAD/FMN reductase GTNG_3158 (185 aa).

Anthranilate 3-monooxygenase consists of a reductase component (GTNG_3158) and an oxygenase component HpaH.

It catalyses the reaction FADH2 + NAD(+) = FAD + NADH + 2 H(+). The catalysed reaction is FADH2 + NADP(+) = FAD + NADPH + 2 H(+). Involved in the pathway of tryptophan degradation. Reduces FAD/FMN to FADH(2)/FMNH(2), which are subsequently used for the hydroxylation of anthranilate. It can reduce either FAD or flavin mononucleotide (FMN) but prefers FAD. The enzyme has a slight preference for NADPH as acceptor. In Geobacillus thermodenitrificans (strain NG80-2), this protein is NAD(P)H-dependent FAD/FMN reductase GTNG_3158.